The sequence spans 224 residues: Elongation factor 1-beta (224 aa).

Belongs to the EF-1-beta/EF-1-delta family. EF-1 is composed of 4 subunits: alpha, beta (1B-alpha=beta'), delta (1B-beta), and gamma (1B-gamma).

In terms of biological role, EF-1-beta and EF-1-beta' stimulate the exchange of GDP bound to EF-1-alpha to GTP. The protein is Elongation factor 1-beta of Oryza sativa subsp. japonica (Rice).